We begin with the raw amino-acid sequence, 130 residues long: MSMQDPIADMLTRIRNGQAAKHVSVKMPSAKLKIAIAKVLKEEGYITDYAVADEAKPELEVTLKYFQGQPVVETIQRVSRPGLRIYKGKNELPKVMGGLGVAIVSTSKGLMTDRTARQNGMGGEVICYVA.

The protein belongs to the universal ribosomal protein uS8 family. Part of the 30S ribosomal subunit. Contacts proteins S5 and S12.

In terms of biological role, one of the primary rRNA binding proteins, it binds directly to 16S rRNA central domain where it helps coordinate assembly of the platform of the 30S subunit. This chain is Small ribosomal subunit protein uS8, found in Shewanella piezotolerans (strain WP3 / JCM 13877).